Consider the following 158-residue polypeptide: UPF0758 protein YkfG (158 aa).

In terms of domain architecture, MPN spans 36–158 (AFTSTHAVRE…IYSFAEHGLL (123 aa)). Zn(2+)-binding residues include His107, His109, and Asp120. A JAMM motif motif is present at residues 107 to 120 (HNHPSGETTPSQAD).

This sequence belongs to the UPF0758 family.

The protein is UPF0758 protein YkfG (ykfG) of Escherichia coli (strain K12).